A 22-amino-acid polypeptide reads, in one-letter code: Zinc finger protein 326 (22 aa).

The disordered stretch occupies residues 1-22 (QGYGFNEPEQTRNQGGSSWEAP). Residues 11 to 22 (TRNQGGSSWEAP) are compositionally biased toward polar residues.

The protein belongs to the AKAP95 family.

The protein localises to the nucleus matrix. Functionally, probable transcriptional activator which may play a role in neuronal differentiation. Able to bind DNA and activate expression in vitro. The protein is Zinc finger protein 326 (Znf326) of Rattus norvegicus (Rat).